The sequence spans 143 residues: Large ribosomal subunit protein uL11 (143 aa).

Belongs to the universal ribosomal protein uL11 family. In terms of assembly, part of the ribosomal stalk of the 50S ribosomal subunit. Interacts with L10 and the large rRNA to form the base of the stalk. L10 forms an elongated spine to which L12 dimers bind in a sequential fashion forming a multimeric L10(L12)X complex. Post-translationally, one or more lysine residues are methylated.

Functionally, forms part of the ribosomal stalk which helps the ribosome interact with GTP-bound translation factors. This chain is Large ribosomal subunit protein uL11, found in Azotobacter vinelandii (strain DJ / ATCC BAA-1303).